The following is a 288-amino-acid chain: Damage-control phosphatase AF_1104 (288 aa).

A Subfamily I CxxC motif motif is present at residues 7 to 10 (CPSC). Positions 160, 161, and 194 each coordinate Mn(2+). Residues 247–250 (ANYE) carry the Subfamily I GNFE-like motif motif. Residues 267 to 268 (KC) carry the Subfamily I KC motif motif.

This sequence belongs to the damage-control phosphatase family. Nucleotides phosphatase I subfamily. The cofactor is [2Fe-2S] cluster. Mn(2+) is required as a cofactor. It depends on Ni(2+) as a cofactor.

Functionally, metal-dependent phosphatase with probable damage-control functions. Could hydrolyze oxidatively damaged purine nucleotides or their biosynthetic intermediates. In Archaeoglobus fulgidus (strain ATCC 49558 / DSM 4304 / JCM 9628 / NBRC 100126 / VC-16), this protein is Damage-control phosphatase AF_1104.